A 190-amino-acid polypeptide reads, in one-letter code: NADH-ubiquinone oxidoreductase 75 kDa subunit, mitochondrial (190 aa).

The protein belongs to the complex I 75 kDa subunit family. Core subunit of respiratory chain NADH dehydrogenase (Complex I) which is composed of 45 different subunits. This is the largest subunit of complex I and it is a component of the iron-sulfur (IP) fragment of the enzyme. Complex I associates with ubiquinol-cytochrome reductase complex (Complex III) to form supercomplexes. Interacts with MDM2 and AKAP1. [2Fe-2S] cluster is required as a cofactor. Requires [4Fe-4S] cluster as cofactor.

The protein resides in the mitochondrion inner membrane. It carries out the reaction a ubiquinone + NADH + 5 H(+)(in) = a ubiquinol + NAD(+) + 4 H(+)(out). Functionally, core subunit of the mitochondrial membrane respiratory chain NADH dehydrogenase (Complex I) which catalyzes electron transfer from NADH through the respiratory chain, using ubiquinone as an electron acceptor. Essential for catalysing the entry and efficient transfer of electrons within complex I. Plays a key role in the assembly and stability of complex I and participates in the association of complex I with ubiquinol-cytochrome reductase complex (Complex III) to form supercomplexes. This chain is NADH-ubiquinone oxidoreductase 75 kDa subunit, mitochondrial, found in Mesocricetus auratus (Golden hamster).